A 314-amino-acid chain; its full sequence is Oxidoreductase NAD-binding domain-containing protein 1 (314 aa).

The first 18 residues, 1 to 18, serve as a signal peptide directing secretion; it reads MALVAGSAAYQVLRGVTG. The 104-residue stretch at 63–166 folds into the FAD-binding FR-type domain; that stretch reads EIISPAKVCE…VGGEFCFDPQ (104 aa). 180–185 provides a ligand contact to NAD(+); it reads GVGINP.

This is Oxidoreductase NAD-binding domain-containing protein 1 (oxnad1) from Xenopus tropicalis (Western clawed frog).